A 261-amino-acid polypeptide reads, in one-letter code: MEVVIVPDARAGGELIAEAMAQLLGRKPEALLGVATGSTPLPIYEALAAQVKSGAVDASRARIAQLDEYVGLPAEHPESYRSVLRREVLEPLGLGMDAFMGPDGTAEDVQGACEAYDKALAAAGGVDLQLLGIGTDGHIGFNEPCSSLASRTRIKTLTEQTRVDNARFFDGDIEQVPHHVITQGIGTILEARHLVLLATGEGKADAVAATVEGPVAAVCPASALQLHPHATVVVDDAAASKLKLADYFRHTYAGKPDWQGI.

The active-site Proton acceptor; for enolization step is the aspartate 67. The For ring-opening step role is filled by aspartate 136. Histidine 138 functions as the Proton acceptor; for ring-opening step in the catalytic mechanism. Catalysis depends on glutamate 143, which acts as the For ring-opening step.

It belongs to the glucosamine/galactosamine-6-phosphate isomerase family. NagB subfamily.

It catalyses the reaction alpha-D-glucosamine 6-phosphate + H2O = beta-D-fructose 6-phosphate + NH4(+). The protein operates within amino-sugar metabolism; N-acetylneuraminate degradation; D-fructose 6-phosphate from N-acetylneuraminate: step 5/5. Functionally, catalyzes the reversible isomerization-deamination of glucosamine 6-phosphate (GlcN6P) to form fructose 6-phosphate (Fru6P) and ammonium ion. The chain is Glucosamine-6-phosphate deaminase from Streptomyces avermitilis (strain ATCC 31267 / DSM 46492 / JCM 5070 / NBRC 14893 / NCIMB 12804 / NRRL 8165 / MA-4680).